The sequence spans 332 residues: Acryloyl-coenzyme A reductase (332 aa).

Cys-38 contributes to the Zn(2+) binding site. An NADP(+)-binding site is contributed by Tyr-39. His-60, Asp-90, Cys-93, Cys-96, Cys-104, and Cys-146 together coordinate Zn(2+). NADP(+)-binding positions include 172 to 175 (SGGV) and 194 to 196 (TTS).

The protein belongs to the zinc-containing alcohol dehydrogenase family. As to quaternary structure, monomer. It depends on Zn(2+) as a cofactor.

The catalysed reaction is propanoyl-CoA + NADP(+) = acryloyl-CoA + NADPH + H(+). Its function is as follows. Plays a role in autotrophic carbon fixation via the 3-hydroxypropionate/4-hydroxybutyrate cycle. Catalyzes the acryloyl-CoA dependent NADPH oxidation and formation of propionyl-CoA. This chain is Acryloyl-coenzyme A reductase, found in Metallosphaera sedula (strain ATCC 51363 / DSM 5348 / JCM 9185 / NBRC 15509 / TH2).